A 127-amino-acid chain; its full sequence is Small ribosomal subunit protein uS11 (127 aa).

It belongs to the universal ribosomal protein uS11 family. Part of the 30S ribosomal subunit. Interacts with proteins S7 and S18. Binds to IF-3.

Functionally, located on the platform of the 30S subunit, it bridges several disparate RNA helices of the 16S rRNA. Forms part of the Shine-Dalgarno cleft in the 70S ribosome. The sequence is that of Small ribosomal subunit protein uS11 from Flavobacterium johnsoniae (strain ATCC 17061 / DSM 2064 / JCM 8514 / BCRC 14874 / CCUG 350202 / NBRC 14942 / NCIMB 11054 / UW101) (Cytophaga johnsonae).